The following is a 403-amino-acid chain: MLALILTISICIFLKGSTCSYINLGSEGIVFGAPNCPVDIPLTCTNSTPIDNSCCFESPGGILLSTQFWDYYPPIGGNESFTLHGLWPDNCDGTYEQFCDDSLNIRSATDIVLNQFGDKVLYGKMSEFWKNFNGNDESLWIHEFNKHATCVKTIRPTCYDNQRYVKNKNVYDFYNITMNLYEKLPTFQFLAAEGIVPSLTQKYSKKQINDALTKYFGKAVYFKCNKYKALQEVWYYHYLQGSLKEENFSPIDTIINSNCPEENIQFIPKNGFNPGPQPPKSPRKGYLESPGKKGCLISNGLWYEAGTCATYAISQQEFGGYKIRSSKGYCGMNSQGQFTCNKQVDPTKNQFQYNKDTRKIGYGGNFAWCLDTEHKHGDGKTAQTPIKISDGQCDSFPVQYGGK.

The signal sequence occupies residues 1–19 (MLALILTISICIFLKGSTC). 4 cysteine pairs are disulfide-bonded: Cys-36–Cys-55, Cys-44–Cys-91, Cys-54–Cys-158, and Cys-99–Cys-150. The N-linked (GlcNAc...) asparagine glycan is linked to Asn-78. Catalysis depends on residues His-84, Glu-143, and His-147. A glycan (N-linked (GlcNAc...) asparagine) is linked at Asn-175. An intrachain disulfide couples Cys-224 to Cys-259. The interval 268–288 (PKNGFNPGPQPPKSPRKGYLE) is disordered.

This sequence belongs to the RNase T2 family.

The protein localises to the vacuole lumen. The protein resides in the cytoplasm. It catalyses the reaction a ribonucleotidyl-ribonucleotide-RNA + H2O = a 3'-end 3'-phospho-ribonucleotide-RNA + a 5'-end dephospho-ribonucleoside-RNA + H(+). Functionally, rnase which modulates cell survival under stress conditions. Released from the vacuole to the cytoplasm during stress to promote tRNA and rRNA cleavage and to activate separately a downstream pathway that promotes cell death. Involved in cell size, vacuolar morphology and growth at high temperatures and high salt concentration. This chain is Ribonuclease T2-like (RNY1), found in Debaryomyces hansenii (strain ATCC 36239 / CBS 767 / BCRC 21394 / JCM 1990 / NBRC 0083 / IGC 2968) (Yeast).